The primary structure comprises 148 residues: SsrA-binding protein (148 aa).

The tract at residues 119 to 148 is disordered; sequence AKGKKQHDKRQSMKEADWKREKQRLIKHTR. The segment covering 127-142 has biased composition (basic and acidic residues); sequence KRQSMKEADWKREKQR.

This sequence belongs to the SmpB family.

The protein resides in the cytoplasm. Functionally, required for rescue of stalled ribosomes mediated by trans-translation. Binds to transfer-messenger RNA (tmRNA), required for stable association of tmRNA with ribosomes. tmRNA and SmpB together mimic tRNA shape, replacing the anticodon stem-loop with SmpB. tmRNA is encoded by the ssrA gene; the 2 termini fold to resemble tRNA(Ala) and it encodes a 'tag peptide', a short internal open reading frame. During trans-translation Ala-aminoacylated tmRNA acts like a tRNA, entering the A-site of stalled ribosomes, displacing the stalled mRNA. The ribosome then switches to translate the ORF on the tmRNA; the nascent peptide is terminated with the 'tag peptide' encoded by the tmRNA and targeted for degradation. The ribosome is freed to recommence translation, which seems to be the essential function of trans-translation. The protein is SsrA-binding protein of Neisseria gonorrhoeae (strain ATCC 700825 / FA 1090).